A 1011-amino-acid polypeptide reads, in one-letter code: Multiple C2 domain and transmembrane region protein 7 (1011 aa).

The C2 1 domain occupies 1–110; sequence MMMSNLKLGV…PHSDAVVLHF (110 aa). The segment covering 178–195 has biased composition (polar residues); the sequence is QEHQHQHPQGPNQSSSLA. Residues 178-201 form a disordered region; the sequence is QEHQHQHPQGPNQSSSLAAEQDNH. C2 domains lie at 261–381, 421–546, and 587–709; these read IHKD…PQWY, VDCS…ARWY, and YSSD…THSY. Positions 294, 300, 347, 349, and 354 each coordinate Ca(2+). Helical transmembrane passes span 812–832, 846–866, and 954–974; these read MMTV…ICSW, LMLV…MFLI, and IFVI…IQIV.

The protein belongs to the MCTP family. Requires Ca(2+) as cofactor. Accumulates specifically in hydathodes. Restricted the basal meristem of roots. Observed in flowers.

The protein localises to the membrane. The protein resides in the vesicle. It localises to the endosome membrane. May function as a signaling molecule by regulating the trafficking of other regulators. This is Multiple C2 domain and transmembrane region protein 7 from Arabidopsis thaliana (Mouse-ear cress).